Here is a 208-residue protein sequence, read N- to C-terminus: Protein-L-isoaspartate O-methyltransferase (208 aa).

Ser-59 is a catalytic residue.

This sequence belongs to the methyltransferase superfamily. L-isoaspartyl/D-aspartyl protein methyltransferase family.

Its subcellular location is the cytoplasm. It catalyses the reaction [protein]-L-isoaspartate + S-adenosyl-L-methionine = [protein]-L-isoaspartate alpha-methyl ester + S-adenosyl-L-homocysteine. Its function is as follows. Catalyzes the methyl esterification of L-isoaspartyl residues in peptides and proteins that result from spontaneous decomposition of normal L-aspartyl and L-asparaginyl residues. It plays a role in the repair and/or degradation of damaged proteins. This Yersinia enterocolitica serotype O:8 / biotype 1B (strain NCTC 13174 / 8081) protein is Protein-L-isoaspartate O-methyltransferase.